The chain runs to 475 residues: ATP synthase subunit beta (475 aa).

An ATP-binding site is contributed by 153-160 (GGAGVGKT).

This sequence belongs to the ATPase alpha/beta chains family. F-type ATPases have 2 components, CF(1) - the catalytic core - and CF(0) - the membrane proton channel. CF(1) has five subunits: alpha(3), beta(3), gamma(1), delta(1), epsilon(1). CF(0) has three main subunits: a(1), b(2) and c(9-12). The alpha and beta chains form an alternating ring which encloses part of the gamma chain. CF(1) is attached to CF(0) by a central stalk formed by the gamma and epsilon chains, while a peripheral stalk is formed by the delta and b chains.

It is found in the cell membrane. It carries out the reaction ATP + H2O + 4 H(+)(in) = ADP + phosphate + 5 H(+)(out). Produces ATP from ADP in the presence of a proton gradient across the membrane. The catalytic sites are hosted primarily by the beta subunits. The sequence is that of ATP synthase subunit beta from Limosilactobacillus reuteri (strain DSM 20016) (Lactobacillus reuteri).